We begin with the raw amino-acid sequence, 433 residues long: 3-phosphoshikimate 1-carboxyvinyltransferase (433 aa).

3-phosphoshikimate contacts are provided by Lys-23, Ser-24, and Arg-28. Phosphoenolpyruvate is bound at residue Lys-23. Phosphoenolpyruvate-binding residues include Gly-93 and Arg-121. 4 residues coordinate 3-phosphoshikimate: Ser-167, Gln-169, Asp-318, and Lys-345. Gln-169 is a binding site for phosphoenolpyruvate. Catalysis depends on Asp-318, which acts as the Proton acceptor. Positions 349 and 390 each coordinate phosphoenolpyruvate.

Belongs to the EPSP synthase family. As to quaternary structure, monomer.

Its subcellular location is the cytoplasm. The enzyme catalyses 3-phosphoshikimate + phosphoenolpyruvate = 5-O-(1-carboxyvinyl)-3-phosphoshikimate + phosphate. It participates in metabolic intermediate biosynthesis; chorismate biosynthesis; chorismate from D-erythrose 4-phosphate and phosphoenolpyruvate: step 6/7. In terms of biological role, catalyzes the transfer of the enolpyruvyl moiety of phosphoenolpyruvate (PEP) to the 5-hydroxyl of shikimate-3-phosphate (S3P) to produce enolpyruvyl shikimate-3-phosphate and inorganic phosphate. In Nitratiruptor sp. (strain SB155-2), this protein is 3-phosphoshikimate 1-carboxyvinyltransferase.